Consider the following 493-residue polypeptide: Acetylcholine receptor subunit beta (493 aa).

A signal peptide spans 1-24 (MENVRRMALGLVVMMALALSGVGA). Topologically, residues 25–240 (SVMEDTLLSV…VTFYLIIQRK (216 aa)) are extracellular. An intrachain disulfide couples Cys-152 to Cys-166. A glycan (N-linked (GlcNAc...) asparagine) is linked at Asn-165. 3 helical membrane passes run 241 to 265 (PLFY…VFYL), 273 to 291 (MSLS…LLLA), and 307 to 328 (YLMF…VLNL). Over 329-461 (HHRSPNTHTM…WQYVAMVADR (133 aa)) the chain is Cytoplasmic. Position 379 is a phosphotyrosine; by Tyr-kinases (Tyr-379). A helical membrane pass occupies residues 462–480 (LFLYVFFVICSIGTFSIFL).

The protein belongs to the ligand-gated ion channel (TC 1.A.9) family. Acetylcholine receptor (TC 1.A.9.1) subfamily. Beta-1/CHRNB1 sub-subfamily. In terms of assembly, pentamer of two alpha chains, and one each of the beta, delta, and gamma chains.

The protein localises to the postsynaptic cell membrane. It is found in the cell membrane. The enzyme catalyses K(+)(in) = K(+)(out). The catalysed reaction is Na(+)(in) = Na(+)(out). Functionally, after binding acetylcholine, the AChR responds by an extensive change in conformation that affects all subunits and leads to opening of an ion-conducting channel across the plasma membrane. In Tetronarce californica (Pacific electric ray), this protein is Acetylcholine receptor subunit beta (CHRNB1).